We begin with the raw amino-acid sequence, 323 residues long: Acetyl-coenzyme A carboxylase carboxyl transferase subunit alpha (323 aa).

The 255-residue stretch at 39–293 (RLAGKSQQLT…KRSLAESLRQ (255 aa)) folds into the CoA carboxyltransferase C-terminal domain.

It belongs to the AccA family. Acetyl-CoA carboxylase is a heterohexamer composed of biotin carboxyl carrier protein (AccB), biotin carboxylase (AccC) and two subunits each of ACCase subunit alpha (AccA) and ACCase subunit beta (AccD).

Its subcellular location is the cytoplasm. It carries out the reaction N(6)-carboxybiotinyl-L-lysyl-[protein] + acetyl-CoA = N(6)-biotinyl-L-lysyl-[protein] + malonyl-CoA. It functions in the pathway lipid metabolism; malonyl-CoA biosynthesis; malonyl-CoA from acetyl-CoA: step 1/1. Component of the acetyl coenzyme A carboxylase (ACC) complex. First, biotin carboxylase catalyzes the carboxylation of biotin on its carrier protein (BCCP) and then the CO(2) group is transferred by the carboxyltransferase to acetyl-CoA to form malonyl-CoA. The protein is Acetyl-coenzyme A carboxylase carboxyl transferase subunit alpha of Cupriavidus necator (strain ATCC 17699 / DSM 428 / KCTC 22496 / NCIMB 10442 / H16 / Stanier 337) (Ralstonia eutropha).